The following is a 567-amino-acid chain: Low-affinity glucose transporter (567 aa).

Positions 1–24 (MSNQMTDSTSAGSGTEHSVDTNTA) are enriched in polar residues. Residues 1–36 (MSNQMTDSTSAGSGTEHSVDTNTALKAGSPNDLKVS) form a disordered region. At 18–62 (SVDTNTALKAGSPNDLKVSHEEDLNDLEKTAEETLQQKPAKEYIF) the chain is on the cytoplasmic side. Residues 63 to 83 (VSLCCVMVAFGGFVFGWDTGT) form a helical membrane-spanning segment. Residues 84–113 (ISGFVNQTDFLRRFGQEKADGSHYLSNVRT) are Extracellular-facing. An N-linked (GlcNAc...) asparagine glycan is attached at Asn89. The chain crosses the membrane as a helical span at residues 114 to 134 (GLIVSIFNIGCAVGGIVLSNI). The Cytoplasmic segment spans residues 135 to 141 (GDRWGRR). Residues 142-162 (IGLITVIIIYVIGIIIQIASV) form a helical membrane-spanning segment. Residues 163-167 (DKWYQ) lie on the Extracellular side of the membrane. A helical transmembrane segment spans residues 168 to 188 (YFIGRIISGLGVGGITVLSPM). Over 189-199 (LISETAPKHLR) the chain is Cytoplasmic. Residues 200–220 (GTLVSCYQLMITFGIFLGYCT) form a helical membrane-spanning segment. Residues 221-234 (NYGTKNYSNSVQWR) are Extracellular-facing. Residues 235-255 (VPLGLCFAWAIFMVLGMMFVP) form a helical membrane-spanning segment. The Cytoplasmic portion of the chain corresponds to 256-334 (ESARFLVETD…MGIMIQSLQQ (79 aa)). The helical transmembrane segment at 335 to 354 (LTGDNYFFYYGTTIFQSVGM) threads the bilayer. At 355-358 (DDSF) the chain is on the extracellular side. A helical membrane pass occupies residues 359 to 379 (ETSIVLGIVNFASTFFALYTV). Residues 380 to 386 (DHFGRRN) lie on the Cytoplasmic side of the membrane. A helical membrane pass occupies residues 387-407 (CLLYGCVGMVACYVVYASVGV). Residues 408-429 (TRLWPDGPDHPDISSKGAGNCM) are Extracellular-facing. Residues 430 to 450 (IVFACFYIFCFATTWAPIAYV) form a helical membrane-spanning segment. At 451–466 (VISESYPLRVKGKAMA) the chain is on the cytoplasmic side. Residues 467–487 (IASASNWIWGFLIGFFTPFIT) form a helical membrane-spanning segment. Topologically, residues 488–493 (SAIHFY) are extracellular. A helical transmembrane segment spans residues 494–514 (YGYVFMGCMVFAFFYVYFFVP). Topologically, residues 515–567 (ETKGLTLEEVNEMYSEGVLPWKSSSWVPSSRRGAEYDVDALQHDDKPWYKAML) are cytoplasmic.

It belongs to the major facilitator superfamily. Sugar transporter (TC 2.A.1.1) family.

Its subcellular location is the membrane. Low-affinity glucose transporter. The sequence is that of Low-affinity glucose transporter (RAG1) from Kluyveromyces lactis (strain ATCC 8585 / CBS 2359 / DSM 70799 / NBRC 1267 / NRRL Y-1140 / WM37) (Yeast).